Reading from the N-terminus, the 488-residue chain is MNSLYIAGVWQDGQGEVVNSLNPVTQQVLWSGRGASAAQVEQAVQAARQAFPGWALLSLDQRIAVLEAFAARLKHHADALAQCIGEETGKPLWESATEVTSMVNKIAISVQSYRERTGEKSGPLGDATAVLRHKPHGVVAVFGPYNFPGHLPNGHIVPALLAGNVVLFKPSELTPKVAELTVKCWIEAGLPAGVLNLLQGGRETGIALAANPGIDGLFFTGSSRTGNALHQQFAGRPDKILALEMGGNNPLIVDQVQDIDAAVYTIIQSAFISAGQRCTCARRLLVPEGDWGDALLARLVGVSATIEAGAFDQQPAPFMGSVISLEAARALLDAQRNLLANGALTLLEMRQPQPGAALLTPGIIDVSAVPERPDEELFGPLLQVIRYAGFDAAIAEANATRYGLAAGLLSDSEARYQQFWLHSRAGIVNWNKPLTGAASSAPFGGVGASGNHRASAYYAADYCAYPVASLEAGSLTLPATLTPGIRLS.

221-226 (GSSRTG) lines the NAD(+) pocket. Catalysis depends on residues E244 and C278.

Belongs to the aldehyde dehydrogenase family. AstD subfamily.

The enzyme catalyses N-succinyl-L-glutamate 5-semialdehyde + NAD(+) + H2O = N-succinyl-L-glutamate + NADH + 2 H(+). Its pathway is amino-acid degradation; L-arginine degradation via AST pathway; L-glutamate and succinate from L-arginine: step 4/5. Its function is as follows. Catalyzes the NAD-dependent reduction of succinylglutamate semialdehyde into succinylglutamate. This Pseudomonas syringae pv. syringae (strain B728a) protein is N-succinylglutamate 5-semialdehyde dehydrogenase.